Here is a 69-residue protein sequence, read N- to C-terminus: Putative membrane protein insertion efficiency factor (69 aa).

This sequence belongs to the UPF0161 family.

The protein localises to the cell membrane. Could be involved in insertion of integral membrane proteins into the membrane. This Clostridium botulinum (strain ATCC 19397 / Type A) protein is Putative membrane protein insertion efficiency factor.